Here is an 853-residue protein sequence, read N- to C-terminus: E3 ubiquitin-protein ligase RNF216 (853 aa).

Disordered regions lie at residues 33-102, 125-152, and 165-228; these read TISD…DDIV, PLEVQNQSSEDSETELLSNPGEPAASVD, and PYFQ…AHPL. Residues 53-73 show a composition bias toward acidic residues; it reads QQEDDLDDDVILTEDDSEDEY. Residue Lys-89 forms a Glycyl lysine isopeptide (Lys-Gly) (interchain with G-Cter in SUMO2) linkage. Residues Lys-339 and Lys-342 each participate in a glycyl lysine isopeptide (Lys-Gly) (interchain with G-Cter in SUMO2) cross-link. Ser-407 bears the Phosphoserine mark. Residues Lys-413, Lys-418, Lys-436, Lys-447, and Lys-473 each participate in a glycyl lysine isopeptide (Lys-Gly) (interchain with G-Cter in SUMO2) cross-link. A coiled-coil region spans residues 463–479; that stretch reads VKQEQEFYEQKIKEMAE. The segment at 499-716 is TRIAD supradomain; sequence QLIECRCCYG…SPGAPCQECS (218 aa). Zn(2+) is bound by residues Cys-503, Cys-506, Cys-525, Cys-528, Cys-593, and Cys-596. Residues 503 to 552 form an RING-type 1 zinc finger; sequence CRCCYGEFPFEELTQCADAHLFCKECLIRYAQEAVFGSGKSELSCMEGSC. Residues 571-636 form an IBR-type zinc finger; the sequence is YKYYERKAEE…LWKEHNGLTC (66 aa). Lys-607 is covalently cross-linked (Glycyl lysine isopeptide (Lys-Gly) (interchain with G-Cter in SUMO2)). The Zn(2+) site is built by Cys-611, Cys-616, Cys-621, Cys-624, His-631, and Cys-636. Residues Lys-646 and Lys-654 each participate in a glycyl lysine isopeptide (Lys-Gly) (interchain with G-Cter in SUMO2) cross-link. Positions 663 and 666 each coordinate Zn(2+). The segment at 663–691 adopts an RING-type 2; atypical zinc-finger fold; it reads CHKCGTGLIKSEGCNRMSCRCGAQMCYLC. Cys-676 is a catalytic residue. Zn(2+) is bound by residues Cys-681, Cys-683, Cys-688, Cys-691, His-704, and Cys-712. Residues 725 to 751 adopt a coiled-coil conformation; the sequence is TEDDEKLIEEIQKEAEEEQKRKNGENT. Residues Lys-753 and Lys-761 each participate in a glycyl lysine isopeptide (Lys-Gly) (interchain with G-Cter in SUMO2) cross-link.

As to quaternary structure, interacts with UBE2L3 and to some extent with UBE2L6. Interacts with TRAF3, TLR3, TLR4, TLR5 and TLR9. Isoform 3/ZIN binds RIPK1. In terms of processing, auto-ubiquitinated. Phosphorylation at Ser-719 enhances acceptor ubiquitin binding and chain-type specificity towards 'Lys-63' di-ubiquitin but not di-ubiquitin with other linkage types.

The protein resides in the cytoplasm. Its subcellular location is the cytoplasmic vesicle. It is found in the clathrin-coated vesicle. It carries out the reaction S-ubiquitinyl-[E2 ubiquitin-conjugating enzyme]-L-cysteine + [acceptor protein]-L-lysine = [E2 ubiquitin-conjugating enzyme]-L-cysteine + N(6)-ubiquitinyl-[acceptor protein]-L-lysine.. The protein operates within protein modification; protein ubiquitination. Allosterically activated by 'Lys-63'-linked di-ubiquitin. E3 ubiquitin ligase which accepts ubiquitin from specific E2 ubiquitin-conjugating enzymes, and then transfers it to substrates promoting their ubiquitination. Plays a role in the regulation of antiviral responses by promoting the degradation of TRAF3, TLR4 and TLR9. In turn, down-regulates NF-kappa-B and IRF3 activation as well as beta interferon production. Also participates in the regulation of autophagy by ubiquitinating BECN1 leading to its degradation and autophagy inhibition. Plays a role in ARC-dependent synaptic plasticity by mediating ARC ubiquitination resulting in its rapid proteasomal degradation. Plays aso an essential role in spermatogenesis and male fertility. Mechanistically, regulates meiosis by promoting the degradation of PRKACB through the ubiquitin-mediated lysosome pathway. Modulates the gonadotropin-releasing hormone signal pathway by affecting the stability of STAU2 that is required for the microtubule-dependent transport of neuronal RNA from the cell body to the dendrite. This Mus musculus (Mouse) protein is E3 ubiquitin-protein ligase RNF216 (Rnf216).